Reading from the N-terminus, the 482-residue chain is Glycogen synthase (482 aa).

Lys-15 contacts ADP-alpha-D-glucose.

The protein belongs to the glycosyltransferase 1 family. Bacterial/plant glycogen synthase subfamily.

It catalyses the reaction [(1-&gt;4)-alpha-D-glucosyl](n) + ADP-alpha-D-glucose = [(1-&gt;4)-alpha-D-glucosyl](n+1) + ADP + H(+). It functions in the pathway glycan biosynthesis; glycogen biosynthesis. In terms of biological role, synthesizes alpha-1,4-glucan chains using ADP-glucose. This Hydrogenobaculum sp. (strain Y04AAS1) protein is Glycogen synthase.